Consider the following 243-residue polypeptide: Probable transcriptional regulatory protein Ldb0677 (243 aa).

Residues 1–22 (MSGHSKWHNIQGRKNAQDAKRG) are disordered.

Belongs to the TACO1 family.

It is found in the cytoplasm. The sequence is that of Probable transcriptional regulatory protein Ldb0677 from Lactobacillus delbrueckii subsp. bulgaricus (strain ATCC 11842 / DSM 20081 / BCRC 10696 / JCM 1002 / NBRC 13953 / NCIMB 11778 / NCTC 12712 / WDCM 00102 / Lb 14).